The sequence spans 214 residues: Probable nicotinate-nucleotide adenylyltransferase (214 aa).

Belongs to the NadD family.

The enzyme catalyses nicotinate beta-D-ribonucleotide + ATP + H(+) = deamido-NAD(+) + diphosphate. The protein operates within cofactor biosynthesis; NAD(+) biosynthesis; deamido-NAD(+) from nicotinate D-ribonucleotide: step 1/1. Its function is as follows. Catalyzes the reversible adenylation of nicotinate mononucleotide (NaMN) to nicotinic acid adenine dinucleotide (NaAD). The protein is Probable nicotinate-nucleotide adenylyltransferase of Rubrobacter xylanophilus (strain DSM 9941 / JCM 11954 / NBRC 16129 / PRD-1).